Reading from the N-terminus, the 171-residue chain is Signal peptidase complex catalytic subunit SEC11 (171 aa).

Residues 1-6 (MNIRQQ) lie on the Cytoplasmic side of the membrane. A helical; Signal-anchor for type II membrane protein transmembrane segment spans residues 7–24 (LVQLLNLAMVLSTAFMFW). Over 25–171 (KGLGLVTNSN…MALSTLLTRE (147 aa)) the chain is Lumenal. Active-site charge relay system residues include Ser-44, His-83, and Asp-113. Positions 157-168 (GLLGLMALSTLL) are C-terminal short (CTS) helix.

This sequence belongs to the peptidase S26B family. In terms of assembly, component of the signal peptidase complex (SPC) composed of a catalytic subunit SEC11 and three accessory subunits SPC1, SPC2 and SPC3. The complex induces a local thinning of the ER membrane which is used to measure the length of the signal peptide (SP) h-region of protein substrates. This ensures the selectivity of the complex towards h-regions shorter than 18-20 amino acids. SPC associates with the translocon complex.

It is found in the endoplasmic reticulum membrane. It carries out the reaction Cleavage of hydrophobic, N-terminal signal or leader sequences from secreted and periplasmic proteins.. Its function is as follows. Catalytic component of the signal peptidase complex (SPC) which catalyzes the cleavage of N-terminal signal sequences from nascent proteins as they are translocated into the lumen of the endoplasmic reticulum. Specifically cleaves N-terminal signal peptides that contain a hydrophobic alpha-helix (h-region) shorter than 18-20 amino acids. This is Signal peptidase complex catalytic subunit SEC11 (SEC11) from Komagataella phaffii (strain GS115 / ATCC 20864) (Yeast).